The chain runs to 143 residues: Large ribosomal subunit protein uL15 (143 aa).

The interval 1-51 (MRLNSIAPAPGSRPSAKRVGRGIGSGLGKTAGRGHKGQKARAGGYHKVGFE) is disordered. Positions 21-31 (RGIGSGLGKTA) are enriched in gly residues.

It belongs to the universal ribosomal protein uL15 family. Part of the 50S ribosomal subunit.

Binds to the 23S rRNA. The sequence is that of Large ribosomal subunit protein uL15 from Thioalkalivibrio sulfidiphilus (strain HL-EbGR7).